The following is a 170-amino-acid chain: Photosystem II extrinsic protein V (170 aa).

The signal sequence occupies residues 1–33 (MVSVFSSLRQSFKGLLVLVPVLIGLAFISPAEA). Residues Cys70, Cys73, His74, and Met137 each contribute to the heme c site.

It belongs to the cytochrome c family. PsbV subfamily. In terms of assembly, PSII is composed of 1 copy each of membrane proteins PsbA, PsbB, PsbC, PsbD, PsbE, PsbF, PsbH, PsbI, PsbJ, PsbK, PsbL, PsbM, PsbT, PsbX, PsbY, PsbZ, Psb30/Ycf12, peripheral proteins PsbO, CyanoQ (PsbQ), PsbU, PsbV and a large number of cofactors. It forms dimeric complexes. Requires heme c as cofactor.

The protein resides in the cellular thylakoid membrane. Functionally, one of the extrinsic, lumenal subunits of photosystem II (PSII). PSII is a light-driven water plastoquinone oxidoreductase, using light energy to abstract electrons from H(2)O, generating a proton gradient subsequently used for ATP formation. The extrinsic proteins stabilize the structure of photosystem II oxygen-evolving complex (OEC), the ion environment of oxygen evolution and protect the OEC against heat-induced inactivation. Low-potential cytochrome c that plays a role in the OEC of PSII. The chain is Photosystem II extrinsic protein V from Synechococcus sp. (strain CC9902).